Here is a 364-residue protein sequence, read N- to C-terminus: GDSL esterase/lipase At1g29660 (364 aa).

The first 26 residues, 1 to 26 (MESYLRKWCLVSVWVLLLGLGFKVKA), serve as a signal peptide directing secretion. Ser39 functions as the Nucleophile in the catalytic mechanism. Active-site charge relay system residues include Asp328 and His331.

The protein belongs to the 'GDSL' lipolytic enzyme family. In terms of tissue distribution, found in phloem exudates.

It localises to the secreted. The protein localises to the extracellular space. It is found in the apoplast. Involved in EDS1-dependent systemic acquired resistance, maybe in phloem-mediated long-distance signaling. This Arabidopsis thaliana (Mouse-ear cress) protein is GDSL esterase/lipase At1g29660.